We begin with the raw amino-acid sequence, 76 residues long: Protein RALF-like 26 (76 aa).

The signal sequence occupies residues 1–22; that stretch reads MKAWMIILLVICVAVVVEQSEA. C37 and C46 are disulfide-bonded. N61 carries N-linked (GlcNAc...) asparagine glycosylation. A disulfide bond links C66 and C72.

This sequence belongs to the plant rapid alkalinization factor (RALF) family.

Its subcellular location is the secreted. Cell signaling peptide that may regulate plant stress, growth, and development. Mediates a rapid alkalinization of extracellular space by mediating a transient increase in the cytoplasmic Ca(2+) concentration leading to a calcium-dependent signaling events through a cell surface receptor and a concomitant activation of some intracellular mitogen-activated protein kinases. The polypeptide is Protein RALF-like 26 (RALFL26) (Arabidopsis thaliana (Mouse-ear cress)).